Here is a 695-residue protein sequence, read N- to C-terminus: Elongation factor G 1 (695 aa).

Residues 5-280 enclose the tr-type G domain; it reads ARYRNIGIFA…AVVDYLPSPT (276 aa). Residues 14 to 21, 78 to 82, and 132 to 135 contribute to the GTP site; these read AHVDAGKT, DTPGH, and NKLD.

This sequence belongs to the TRAFAC class translation factor GTPase superfamily. Classic translation factor GTPase family. EF-G/EF-2 subfamily.

The protein resides in the cytoplasm. In terms of biological role, catalyzes the GTP-dependent ribosomal translocation step during translation elongation. During this step, the ribosome changes from the pre-translocational (PRE) to the post-translocational (POST) state as the newly formed A-site-bound peptidyl-tRNA and P-site-bound deacylated tRNA move to the P and E sites, respectively. Catalyzes the coordinated movement of the two tRNA molecules, the mRNA and conformational changes in the ribosome. The chain is Elongation factor G 1 from Pseudoalteromonas atlantica (strain T6c / ATCC BAA-1087).